The primary structure comprises 274 residues: NADPH-dependent 7-cyano-7-deazaguanine reductase (274 aa).

80-82 (VES) is a substrate binding site. 82–83 (SK) contacts NADPH. C181 serves as the catalytic Thioimide intermediate. Catalysis depends on D188, which acts as the Proton donor. Substrate is bound at residue 220-221 (HE). Residue 249 to 250 (RG) participates in NADPH binding.

The protein belongs to the GTP cyclohydrolase I family. QueF type 2 subfamily. Homodimer.

The protein localises to the cytoplasm. It catalyses the reaction 7-aminomethyl-7-carbaguanine + 2 NADP(+) = 7-cyano-7-deazaguanine + 2 NADPH + 3 H(+). Its pathway is tRNA modification; tRNA-queuosine biosynthesis. In terms of biological role, catalyzes the NADPH-dependent reduction of 7-cyano-7-deazaguanine (preQ0) to 7-aminomethyl-7-deazaguanine (preQ1). The chain is NADPH-dependent 7-cyano-7-deazaguanine reductase from Paraburkholderia phymatum (strain DSM 17167 / CIP 108236 / LMG 21445 / STM815) (Burkholderia phymatum).